A 1128-amino-acid chain; its full sequence is DNA-directed RNA polymerase subunit Rpo2 (1128 aa).

DsDNA-binding positions include Lys178, Ser181–Asn182, Lys206, Arg435–Asn439, and Arg1027–Glu1032. Zn(2+)-binding residues include Cys1061, Cys1064, Cys1079, and His1082.

Belongs to the RNA polymerase beta chain family. As to quaternary structure, part of the 13-subunit RNA polymerase complex. Zn(2+) serves as cofactor.

Its subcellular location is the cytoplasm. It carries out the reaction RNA(n) + a ribonucleoside 5'-triphosphate = RNA(n+1) + diphosphate. Its function is as follows. DNA-dependent RNA polymerase (RNAP) catalyzes the transcription of DNA into RNA using the four ribonucleoside triphosphates as substrates. This subunit is involved in DNA promoter recognition. The polypeptide is DNA-directed RNA polymerase subunit Rpo2 (Saccharolobus shibatae (strain ATCC 51178 / DSM 5389 / JCM 8931 / NBRC 15437 / B12) (Sulfolobus shibatae)).